Consider the following 1234-residue polypeptide: Formin-like protein 3 (1234 aa).

Residues 1–208 enclose the Phosphatase tensin-type domain; the sequence is MRLDSFPASI…QYVARRNISP (208 aa). The Phosphocysteine intermediate role is filled by Cys-141. A C2 tensin-type domain is found at 214–352; the sequence is ERALSFDCLI…FRAEMLFCEL (139 aa). 2 disordered regions span residues 443–478 and 492–840; these read DSDE…NINH and LVNT…LKPL. Over residues 498 to 507 the composition is skewed to pro residues; the sequence is VLPPTTPPPC. Residues 524–534 are compositionally biased toward basic and acidic residues; that stretch reads VQHESPSDRKL. Pro residues-rich tracts occupy residues 536–576, 584–656, 663–673, 688–699, 709–721, 729–739, and 762–784; these read SPSP…PPLP, QPPP…PPAP, PAPPPPPPPPR, GPPPPPPPPLPP, PSAP…PPPA, APAPPLPPPLP, and PAPP…PPPL. The FH2 domain occupies 827–1226; sequence QQSNPPKKAS…KLEKDKEKAT (400 aa).

This sequence belongs to the formin-like family. Class-II subfamily.

This is Formin-like protein 3 (FH3) from Oryza sativa subsp. japonica (Rice).